We begin with the raw amino-acid sequence, 530 residues long: 4,4'-diapolycopene aldehyde oxidase (530 aa).

Residues Glu-234 and Cys-268 contribute to the active site.

This sequence belongs to the aldehyde dehydrogenase family.

It carries out the reaction all-trans-4,4'-diapolycopen-4-al + A + H2O = all-trans-4,4'-diapolycopen-4-oate + AH2 + H(+). The enzyme catalyses all-trans-4,4'-diapolycopene-4,4'-dial + 2 A + 2 H2O = all-trans-4,4'-diapolycopene-4,4'-dioate + 2 AH2 + 2 H(+). It functions in the pathway carotenoid biosynthesis. Functionally, involved in the biosynthesis of C30 carotenoids. Catalyzes the oxidation of 4,4'-diapolycopene-4,4'-dial to yield 4,4'-diapolycopene-4,4'-dioic acid. Also able to catalyze the oxidation of 4,4'-diapolycopen-4-al to yield 4,4'-diapolycopen-4-oic acid. This is 4,4'-diapolycopene aldehyde oxidase from Methylomonas sp.